Consider the following 230-residue polypeptide: Ion-translocating oxidoreductase complex subunit E (230 aa).

6 helical membrane-spanning segments follow: residues 18–38 (ALVQ…ATNA), 39–59 (LGLG…VSAL), 63–83 (TPAE…VSAV), 86–106 (LINA…PLIV), 125–145 (WLSA…MFVL), and 182–202 (PFLL…MLAV).

The protein belongs to the NqrDE/RnfAE family. As to quaternary structure, the complex is composed of six subunits: RsxA, RsxB, RsxC, RsxD, RsxE and RsxG.

The protein localises to the cell inner membrane. In terms of biological role, part of a membrane-bound complex that couples electron transfer with translocation of ions across the membrane. Required to maintain the reduced state of SoxR. This chain is Ion-translocating oxidoreductase complex subunit E, found in Salmonella newport (strain SL254).